A 397-amino-acid chain; its full sequence is Acetate kinase (397 aa).

Asn-8 provides a ligand contact to Mg(2+). Position 15 (Lys-15) interacts with ATP. Arg-89 contributes to the substrate binding site. Asp-146 serves as the catalytic Proton donor/acceptor. ATP contacts are provided by residues 206–210 (HLGNG), 281–283 (DLR), and 329–333 (GVGEN). Position 382 (Glu-382) interacts with Mg(2+).

It belongs to the acetokinase family. In terms of assembly, homodimer. Requires Mg(2+) as cofactor. The cofactor is Mn(2+).

Its subcellular location is the cytoplasm. It catalyses the reaction acetate + ATP = acetyl phosphate + ADP. It functions in the pathway metabolic intermediate biosynthesis; acetyl-CoA biosynthesis; acetyl-CoA from acetate: step 1/2. Its function is as follows. Catalyzes the formation of acetyl phosphate from acetate and ATP. Can also catalyze the reverse reaction. This is Acetate kinase from Bacillus cereus (strain ATCC 10987 / NRS 248).